Reading from the N-terminus, the 498-residue chain is ATP synthase subunit beta, chloroplastic (498 aa).

An ATP-binding site is contributed by 172–179 (GGAGVGKT).

Belongs to the ATPase alpha/beta chains family. As to quaternary structure, F-type ATPases have 2 components, CF(1) - the catalytic core - and CF(0) - the membrane proton channel. CF(1) has five subunits: alpha(3), beta(3), gamma(1), delta(1), epsilon(1). CF(0) has four main subunits: a(1), b(1), b'(1) and c(9-12).

The protein localises to the plastid. The protein resides in the chloroplast thylakoid membrane. The enzyme catalyses ATP + H2O + 4 H(+)(in) = ADP + phosphate + 5 H(+)(out). Produces ATP from ADP in the presence of a proton gradient across the membrane. The catalytic sites are hosted primarily by the beta subunits. This Chamaerops humilis (Mediterranean fan palm) protein is ATP synthase subunit beta, chloroplastic.